The following is a 294-amino-acid chain: tRNA pseudouridine synthase A (294 aa).

Catalysis depends on aspartate 64, which acts as the Nucleophile. Tyrosine 122 provides a ligand contact to substrate.

This sequence belongs to the tRNA pseudouridine synthase TruA family. As to quaternary structure, homodimer.

The enzyme catalyses uridine(38/39/40) in tRNA = pseudouridine(38/39/40) in tRNA. Its function is as follows. Formation of pseudouridine at positions 38, 39 and 40 in the anticodon stem and loop of transfer RNAs. The sequence is that of tRNA pseudouridine synthase A from Synechococcus sp. (strain ATCC 27144 / PCC 6301 / SAUG 1402/1) (Anacystis nidulans).